The sequence spans 307 residues: Ornithine carbamoyltransferase (307 aa).

Carbamoyl phosphate is bound by residues 54–57 (STRT), Q81, R105, and 132–135 (HPCQ). L-ornithine contacts are provided by residues N163, D221, and 225 to 226 (SM). Carbamoyl phosphate contacts are provided by residues 261–262 (CL) and R289.

The protein belongs to the aspartate/ornithine carbamoyltransferase superfamily. OTCase family.

It is found in the cytoplasm. It carries out the reaction carbamoyl phosphate + L-ornithine = L-citrulline + phosphate + H(+). Its pathway is amino-acid biosynthesis; L-arginine biosynthesis; L-arginine from L-ornithine and carbamoyl phosphate: step 1/3. In terms of biological role, reversibly catalyzes the transfer of the carbamoyl group from carbamoyl phosphate (CP) to the N(epsilon) atom of ornithine (ORN) to produce L-citrulline. The chain is Ornithine carbamoyltransferase from Aromatoleum aromaticum (strain DSM 19018 / LMG 30748 / EbN1) (Azoarcus sp. (strain EbN1)).